The sequence spans 461 residues: Growth/differentiation factor 7 (461 aa).

Positions 1 to 19 are cleaved as a signal peptide; that stretch reads MDLSAAAALCLWLLSACRP. Residues 20–315 constitute a propeptide that is removed on maturation; that stretch reads RDGLEAAAVL…ANLGGRRRRR (296 aa). N-linked (GlcNAc...) asparagine glycosylation occurs at Asn-79. A disordered region spans residues 287 to 360; sequence LRAAAEPPPD…GHGRRGRSRC (74 aa). A compositionally biased stretch (gly residues) spans 323–350; sequence GAQGSGGGGGGGGGGGGGGGGGGGGAGR. The segment covering 351–360 has biased composition (basic residues); sequence GHGRRGRSRC. 3 disulfide bridges follow: Cys-360-Cys-426, Cys-389-Cys-458, and Cys-393-Cys-460.

It belongs to the TGF-beta family. As to quaternary structure, homodimer; disulfide-linked.

It localises to the secreted. In Mus musculus (Mouse), this protein is Growth/differentiation factor 7 (Gdf7).